The chain runs to 1468 residues: DNA polymerase III PolC-type (1468 aa).

Positions 197-217 (QKSLEDSAPPSEEVTPTQNYD) are disordered. Residues 430–586 (YVVFDVETTG…YDAEATGRLL (157 aa)) enclose the Exonuclease domain.

Belongs to the DNA polymerase type-C family. PolC subfamily.

The protein resides in the cytoplasm. It catalyses the reaction DNA(n) + a 2'-deoxyribonucleoside 5'-triphosphate = DNA(n+1) + diphosphate. In terms of biological role, required for replicative DNA synthesis. This DNA polymerase also exhibits 3' to 5' exonuclease activity. The protein is DNA polymerase III PolC-type of Streptococcus agalactiae serotype III (strain NEM316).